Here is a 317-residue protein sequence, read N- to C-terminus: Ribosomal protein L11 methyltransferase (317 aa).

Residues T158, G179, D201, and N244 each coordinate S-adenosyl-L-methionine.

The protein belongs to the methyltransferase superfamily. PrmA family.

It localises to the cytoplasm. The catalysed reaction is L-lysyl-[protein] + 3 S-adenosyl-L-methionine = N(6),N(6),N(6)-trimethyl-L-lysyl-[protein] + 3 S-adenosyl-L-homocysteine + 3 H(+). Functionally, methylates ribosomal protein L11. In Streptococcus uberis (strain ATCC BAA-854 / 0140J), this protein is Ribosomal protein L11 methyltransferase.